The chain runs to 987 residues: MKVVNLKQAILQAWKERWSDYQWAINMKKFFPKGATWDILNLAEALLEQAMIGPSPNPLILSYLKYAISSQMVSCSSVLTAISKFDDFSRDLCVQALLDIMDMFCDRLSCHGKAEECIGLCRALLSALHWLLRCTAASAERLQEGLEAGTPAPGEKQLALCLQCLEKTLSSTKNRALLHIAKLEEASSWTAIEHSLLKLGEILANLSNPQLRSQAERCGTLIRSIPSMLSVHSEQLHKTGFPTIHALILLEGTMNLTGEMQPLVEQLMMVKRMQHIPTPLFVLEIWKACFVGLIESPEGTQELKWTAFTYLKIPQVLVKLKKYFHGEKDFTEDVNCAFEFLLKLTPLLDKADQRCNCDCTNFLLQECNKQGLLSEVNFASLVGKRTADRDPQLKSSENANIQPNPGLILRAEPTVTNILKTMDADHSKSPEGLLGVLGHMLSGKSLDLLLAAAAATGKLKSFARKFINLNEFTTHGSGESTKTASVRALLFDISFLMLCHVAQTYGSEVILSESSSGEEVPFFETWMQTCMPEEGKILNPDHPCFRPDSTKVESLVALLNNSSEMKLVQMKWHEACLSISAAILEILNAWENGVLAFESIQKITDNIKGKVCSLAVCAVAWLVAHVRMLGLDEREKSLQMIRQLAGPLYSENTLQFYNERVVIMNSILEHMCADVLQQTATQIKFPSTGVDTMPYWNLLPPKRPIKEVLTDIFAKVLEKGWVDSRSIHILDTLLHMGGVYWFCNNLIKELLKETRKEHTLRAVQLLYSIFCLDMQQVTLVLLGHILPGLLTDSSKWHSLMDPPGTALAKLAVWCALSSYSSHKGQASSRQKKRHREDIEDYVSLFPVEDMQPSKLMRLLSSSDDDANILSSPTDRSMNSSLSASQLHTVNMRDPLNRVLANLFLLISSILGSRTAGPHTQFVQWFMEECVGCLEQDSRGSILQFMPFTTVSELVKVSAMSSPKVVLAITDLSLPLGRQVAAKAIAAL.

6 consecutive short sequence motifs (LXXLL motif) follow at residues Leu128–Leu132, Leu344–Leu348, Leu446–Leu450, Leu555–Leu559, Leu786–Leu790, and Leu855–Leu859. 2 positions are modified to phosphoserine: Ser860 and Ser871.

This sequence belongs to the Mediator complex subunit 24 family. As to quaternary structure, component of the Mediator complex, which is composed of MED1, MED4, MED6, MED7, MED8, MED9, MED10, MED11, MED12, MED13, MED13L, MED14, MED15, MED16, MED17, MED18, MED19, MED20, MED21, MED22, MED23, MED24, MED25, MED26, MED27, MED29, MED30, MED31, CCNC, CDK8 and CDC2L6/CDK11. The MED12, MED13, CCNC and CDK8 subunits form a distinct module termed the CDK8 module. Mediator containing the CDK8 module is less active than Mediator lacking this module in supporting transcriptional activation. Individual preparations of the Mediator complex lacking one or more distinct subunits have been variously termed ARC, CRSP, DRIP, PC2, SMCC and TRAP. Interacts with AR. Interacts with MED1 and MED10. Expressed in the adrenal gland, brain, epididymis, heart, kidney, liver, ovary, pancreas, prostate, skeletal muscle, small intestine, spleen, stomach, testis and thymus.

It is found in the nucleus. Its function is as follows. Component of the Mediator complex, a coactivator involved in the regulated transcription of nearly all RNA polymerase II-dependent genes. Mediator functions as a bridge to convey information from gene-specific regulatory proteins to the basal RNA polymerase II transcription machinery. Mediator is recruited to promoters by direct interactions with regulatory proteins and serves as a scaffold for the assembly of a functional preinitiation complex with RNA polymerase II and the general transcription factors. Required for basal and activator-dependent transcription. The polypeptide is Mediator of RNA polymerase II transcription subunit 24 (Med24) (Mus musculus (Mouse)).